The following is a 183-amino-acid chain: Caltractin ICL1f (183 aa).

Positions M1 to Q19 are enriched in low complexity. The tract at residues M1–E30 is disordered. EF-hand domains lie at E39 to E74, A75 to E110, D112 to T147, and M148 to A183. D52, D54, T56, S58, E63, D88, D90, S92, Q94, and E99 together coordinate Ca(2+).

The protein belongs to the centrin family. As to quaternary structure, monomer.

The protein localises to the cytoplasm. The protein resides in the cytoskeleton. In terms of biological role, plays a fundamental role in microtubule organizing center structure and function. Component of the infraciliary lattice (ICL) and the ciliary basal bodies. This Paramecium tetraurelia protein is Caltractin ICL1f (Icl1f).